The primary structure comprises 386 residues: Cobalt-precorrin-5B C(1)-methyltransferase (386 aa).

Belongs to the CbiD family.

The enzyme catalyses Co-precorrin-5B + S-adenosyl-L-methionine = Co-precorrin-6A + S-adenosyl-L-homocysteine. Its pathway is cofactor biosynthesis; adenosylcobalamin biosynthesis; cob(II)yrinate a,c-diamide from sirohydrochlorin (anaerobic route): step 6/10. Catalyzes the methylation of C-1 in cobalt-precorrin-5B to form cobalt-precorrin-6A. This chain is Cobalt-precorrin-5B C(1)-methyltransferase, found in Prochlorococcus marinus (strain MIT 9303).